The following is a 220-amino-acid chain: GTP-binding nuclear protein GSP2/CNR2 (220 aa).

S2 is subject to N-acetylserine. S2 is subject to Phosphoserine. One can recognise a Small GTPase Ran-type domain in the interval 10–174 (EVPTFKLVLV…LWLARKLAGN (165 aa)). Residue 21 to 28 (DGGTGKTT) coordinates GTP. The interval 40 to 48 (KKYIATIGV) is switch-I. Residues G71, 125–128 (NKVD), and 153–155 (SAK) each bind GTP. Residues 71 to 87 (GQEKFGGLRDGYYINAQ) are switch-II.

Belongs to the small GTPase superfamily. Ran family. In terms of assembly, found in a nuclear export complex with RanGTP, exportin and pre-miRNA.

It is found in the nucleus. GTP-binding protein involved in nucleocytoplasmic transport. Required for the import of protein into the nucleus and also for RNA export. Not essential for cell viability. In Saccharomyces cerevisiae (strain ATCC 204508 / S288c) (Baker's yeast), this protein is GTP-binding nuclear protein GSP2/CNR2 (GSP2).